The primary structure comprises 46 residues: Homeobox protein Hox-D4 (46 aa).

The segment at residues 1–46 (VNSNYTGGEPKRSRTAYTRQQVLELEKEFLFNRYLTRRRRIQHTLT) is a DNA-binding region (homeobox).

Belongs to the Antp homeobox family. Deformed subfamily. As to quaternary structure, forms a DNA-binding heterodimer with transcription factor PBX1.

The protein resides in the nucleus. Functionally, sequence-specific transcription factor which is part of a developmental regulatory system that provides cells with specific positional identities on the anterior-posterior axis. The chain is Homeobox protein Hox-D4 (HOXD4) from Ovis aries (Sheep).